Consider the following 901-residue polypeptide: Protein translocase subunit SecA (901 aa).

ATP is bound by residues Gln87, 105-109, and Asp512; that span reads GEGKT. The disordered stretch occupies residues 859-901; sequence HQDDDSAAAAALAAQTGERKVGRNDPCPCGSGKKYKQCHGRLQ. The Zn(2+) site is built by Cys885, Cys887, Cys896, and His897. A compositionally biased stretch (basic residues) spans 891-901; sequence KKYKQCHGRLQ.

It belongs to the SecA family. As to quaternary structure, monomer and homodimer. Part of the essential Sec protein translocation apparatus which comprises SecA, SecYEG and auxiliary proteins SecDF-YajC and YidC. It depends on Zn(2+) as a cofactor.

It localises to the cell inner membrane. The protein localises to the cytoplasm. The enzyme catalyses ATP + H2O + cellular proteinSide 1 = ADP + phosphate + cellular proteinSide 2.. Part of the Sec protein translocase complex. Interacts with the SecYEG preprotein conducting channel. Has a central role in coupling the hydrolysis of ATP to the transfer of proteins into and across the cell membrane, serving both as a receptor for the preprotein-SecB complex and as an ATP-driven molecular motor driving the stepwise translocation of polypeptide chains across the membrane. This Escherichia coli O127:H6 (strain E2348/69 / EPEC) protein is Protein translocase subunit SecA.